The following is a 213-amino-acid chain: Ribonuclease T (213 aa).

Positions 28–202 constitute an Exonuclease domain; that stretch reads VVVDVETGGF…YDTEQTARLF (175 aa). Positions 31, 33, 189, and 194 each coordinate Mg(2+). H189 serves as the catalytic Proton donor/acceptor.

Belongs to the RNase T family. As to quaternary structure, homodimer. Mg(2+) is required as a cofactor.

Functionally, trims short 3' overhangs of a variety of RNA species, leaving a one or two nucleotide 3' overhang. Responsible for the end-turnover of tRNA: specifically removes the terminal AMP residue from uncharged tRNA (tRNA-C-C-A). Also appears to be involved in tRNA biosynthesis. This Xanthomonas euvesicatoria pv. vesicatoria (strain 85-10) (Xanthomonas campestris pv. vesicatoria) protein is Ribonuclease T.